The primary structure comprises 175 residues: Glutamyl-tRNA(Gln) amidotransferase subunit C, mitochondrial (175 aa).

This sequence belongs to the GatC family. Subunit of the heterotrimeric GatCAB amidotransferase (AdT) complex, composed of A, B and C subunits.

Its subcellular location is the mitochondrion. It carries out the reaction L-glutamyl-tRNA(Gln) + L-glutamine + ATP + H2O = L-glutaminyl-tRNA(Gln) + L-glutamate + ADP + phosphate + H(+). Its function is as follows. Allows the formation of correctly charged Gln-tRNA(Gln) through the transamidation of misacylated Glu-tRNA(Gln) in the mitochondria. The reaction takes place in the presence of glutamine and ATP through an activated gamma-phospho-Glu-tRNA(Gln). In Caenorhabditis elegans, this protein is Glutamyl-tRNA(Gln) amidotransferase subunit C, mitochondrial.